Consider the following 660-residue polypeptide: tRNA 5-methylaminomethyl-2-thiouridine biosynthesis bifunctional protein MnmC (660 aa).

A tRNA (mnm(5)s(2)U34)-methyltransferase region spans residues 1–235 (MTITRHARID…KWEVLRGTFI (235 aa)). Residues 266–660 (IGAGLAGCAT…LRGLIRGGGK (395 aa)) are FAD-dependent cmnm(5)s(2)U34 oxidoreductase.

The protein in the N-terminal section; belongs to the methyltransferase superfamily. tRNA (mnm(5)s(2)U34)-methyltransferase family. In the C-terminal section; belongs to the DAO family. The cofactor is FAD.

The protein localises to the cytoplasm. The enzyme catalyses 5-aminomethyl-2-thiouridine(34) in tRNA + S-adenosyl-L-methionine = 5-methylaminomethyl-2-thiouridine(34) in tRNA + S-adenosyl-L-homocysteine + H(+). Its function is as follows. Catalyzes the last two steps in the biosynthesis of 5-methylaminomethyl-2-thiouridine (mnm(5)s(2)U) at the wobble position (U34) in tRNA. Catalyzes the FAD-dependent demodification of cmnm(5)s(2)U34 to nm(5)s(2)U34, followed by the transfer of a methyl group from S-adenosyl-L-methionine to nm(5)s(2)U34, to form mnm(5)s(2)U34. The chain is tRNA 5-methylaminomethyl-2-thiouridine biosynthesis bifunctional protein MnmC from Pseudomonas savastanoi pv. phaseolicola (strain 1448A / Race 6) (Pseudomonas syringae pv. phaseolicola (strain 1448A / Race 6)).